A 320-amino-acid polypeptide reads, in one-letter code: Polyadenylate-binding protein-interacting protein 13 (320 aa).

Positions 1–44 (MAVAENVGVKVDSSNNQNIDNNTTSLVETKPSCSDDQTPKSKSS) are disordered. The segment covering 12 to 44 (DSSNNQNIDNNTTSLVETKPSCSDDQTPKSKSS) has biased composition (polar residues). A PAM2-like motif is present at residues 65-75 (HLNPMAKEFVP). 2 consecutive RRM domains span residues 137–212 (RTVY…MSKT) and 234–310 (KTVY…PSKT).

The sequence is that of Polyadenylate-binding protein-interacting protein 13 (CID13) from Arabidopsis thaliana (Mouse-ear cress).